The primary structure comprises 461 residues: Isthmin-1 (461 aa).

A signal peptide spans 1-26 (MVRLAAELLLLLGLLLLTLHITVLRS). N-linked (GlcNAc...) asparagine glycosylation is present at N33. Residues 40 to 58 (QDSRVAENNVNADSSSSVQ) are compositionally biased toward polar residues. Disordered stretches follow at residues 40-62 (QDSR…LGPG), 73-92 (ASQP…RDGP), and 128-188 (EGSE…NFLK). Residues 131–141 (EPEKGMRKENK) are compositionally biased toward basic and acidic residues. Over residues 156–165 (SSSSSSSSVS) the composition is skewed to low complexity. The 45-residue stretch at 215-259 (DGEGDWSAWSPCSVSCGNGNQKRTRSCGYACTATESRTCDMPSCP) folds into the TSP type-1 domain. Cystine bridges form between C226–C253, C230–C258, and C241–C245. Residue N282 is glycosylated (N-linked (GlcNAc...) asparagine). In terms of domain architecture, AMOP spans 286-449 (LFGVDTDSCE…QKCAENPQDE (164 aa)).

It belongs to the isthmin family.

It is found in the secreted. Functionally, may specifically influence certain angiogenesis process. The chain is Isthmin-1 (ism1) from Danio rerio (Zebrafish).